The sequence spans 299 residues: Probable lipid kinase YegS (299 aa).

Positions 2 to 133 (ANFPASLLIL…IDMARVNDKT (132 aa)) constitute a DAGKc domain. Residues T40, 66 to 72 (GDGTINE), and T95 contribute to the ATP site. L215, D218, and L220 together coordinate Mg(2+). The Proton acceptor role is filled by E271.

This sequence belongs to the diacylglycerol/lipid kinase family. YegS lipid kinase subfamily. It depends on Mg(2+) as a cofactor. Ca(2+) is required as a cofactor.

It is found in the cytoplasm. Probably phosphorylates lipids; the in vivo substrate is unknown. This is Probable lipid kinase YegS from Salmonella paratyphi A (strain ATCC 9150 / SARB42).